Here is a 362-residue protein sequence, read N- to C-terminus: Lactosylceramide alpha-2,3-sialyltransferase (362 aa).

Over 1–5 the chain is Cytoplasmic; it reads MRRPS. Residues 6 to 26 traverse the membrane as a helical; Signal-anchor for type II membrane protein segment; it reads LLLKDILKCTLLVFGVWILYI. The Lumenal portion of the chain corresponds to 27 to 362; sequence LKLNYTTEEC…DLSGGIDREF (336 aa). N-linked (GlcNAc...) asparagine glycosylation is found at Asn30, Asn180, Asn224, and Asn334. Cys139 and Cys297 are oxidised to a cystine.

It belongs to the glycosyltransferase 29 family.

The protein localises to the golgi apparatus membrane. It catalyses the reaction a beta-D-Gal-(1-&gt;4)-beta-D-Glc-(1&lt;-&gt;1)-Cer(d18:1(4E)) + CMP-N-acetyl-beta-neuraminate = a ganglioside GM3 (d18:1(4E)) + CMP + H(+). It carries out the reaction ganglioside GA2 (d18:1(4E)/18:0) + CMP-N-acetyl-beta-neuraminate = ganglioside GM2 (d18:1(4E)/18:0) + CMP + H(+). The catalysed reaction is a beta-D-Gal-(1&lt;-&gt;1')-ceramide + CMP-N-acetyl-beta-neuraminate = N-acetyl-alpha-neuraminosyl-(2-&gt;3)-beta-D-galactosyl-(1&lt;-&gt;1')-ceramide + CMP + H(+). The enzyme catalyses ganglioside GA1 (d18:1(4E)/18:0) + CMP-N-acetyl-beta-neuraminate = ganglioside GM1 (d18:1(4E)/18:0) + CMP + H(+). Functionally, transfers the sialyl group (N-acetyl-alpha-neuraminyl or NeuAc) from CMP-NeuAc to the non-reducing terminal galactose (Gal) of glycosphingolipids forming gangliosides (important molecules involved in the regulation of multiple cellular processes, including cell proliferation and differentiation, apoptosis, embryogenesis, development, and oncogenesis). Mainly involved in the biosynthesis of ganglioside GM3 but can also use different glycolipids as substrate acceptors such as D-galactosylceramide (GalCer), asialo-GM2 (GA2) and asialo-GM1 (GA1), although less preferentially than beta-D-Gal-(1-&gt;4)-beta-D-Glc-(1&lt;-&gt;1)-Cer (LacCer). This is Lactosylceramide alpha-2,3-sialyltransferase (ST3GAL5) from Pan troglodytes (Chimpanzee).